We begin with the raw amino-acid sequence, 211 residues long: Adenylyl-sulfate kinase (211 aa).

Gly-36–Ser-43 is an ATP binding site. Ser-110 (phosphoserine intermediate) is an active-site residue.

Belongs to the APS kinase family.

It catalyses the reaction adenosine 5'-phosphosulfate + ATP = 3'-phosphoadenylyl sulfate + ADP + H(+). Its pathway is sulfur metabolism; hydrogen sulfide biosynthesis; sulfite from sulfate: step 2/3. Catalyzes the synthesis of activated sulfate. The polypeptide is Adenylyl-sulfate kinase (cysC) (Buchnera aphidicola subsp. Schizaphis graminum (strain Sg)).